We begin with the raw amino-acid sequence, 867 residues long: Bifunctional diterpene synthase, chloroplastic (867 aa).

The transit peptide at 1-55 (MAKVLFSSFQQTGISGSLKSGQLSGVFINGTNLKSNAHAKRFRKNSTSSITIRCC) directs the protein to the chloroplast. Residue Lys255 participates in substrate binding. Residues Asp389 and Asp391 each coordinate Mg(2+). The short motif at 389-392 (DIDD) is the DXDD motif element. Lys474 is a binding site for substrate. 5 residues coordinate Mg(2+): Asp611, Asp615, Asn758, Thr762, and Glu766. The DDXXD motif signature appears at 611–615 (DDLMD).

It belongs to the terpene synthase family. It depends on Mg(2+) as a cofactor.

It is found in the plastid. Its subcellular location is the chloroplast. The catalysed reaction is (+)-copalyl diphosphate = miltiradiene + diphosphate. It carries out the reaction (2E,6E,10E)-geranylgeranyl diphosphate = (+)-copalyl diphosphate. Its pathway is secondary metabolite biosynthesis; terpenoid biosynthesis. In terms of biological role, bifunctional diterpene cyclase that catalyzes the successive two-step type-B (protonation-initiated cyclization) and type-A (ionization-initiated cyclization) reactions of geranylgeranyl diphosphate (GGDP) producing successively (+)-copalyl diphosphate and miltiradiene. The sequence is that of Bifunctional diterpene synthase, chloroplastic (MDS) from Selaginella moellendorffii (Spikemoss).